A 599-amino-acid polypeptide reads, in one-letter code: Elongation factor 4 (599 aa).

One can recognise a tr-type G domain in the interval serine 5–threonine 187. Residues aspartate 17–threonine 22 and asparagine 134–aspartate 137 each bind GTP.

The protein belongs to the TRAFAC class translation factor GTPase superfamily. Classic translation factor GTPase family. LepA subfamily.

The protein localises to the cell inner membrane. It catalyses the reaction GTP + H2O = GDP + phosphate + H(+). Functionally, required for accurate and efficient protein synthesis under certain stress conditions. May act as a fidelity factor of the translation reaction, by catalyzing a one-codon backward translocation of tRNAs on improperly translocated ribosomes. Back-translocation proceeds from a post-translocation (POST) complex to a pre-translocation (PRE) complex, thus giving elongation factor G a second chance to translocate the tRNAs correctly. Binds to ribosomes in a GTP-dependent manner. The chain is Elongation factor 4 from Ectopseudomonas mendocina (strain ymp) (Pseudomonas mendocina).